Here is a 255-residue protein sequence, read N- to C-terminus: Large ribosomal subunit protein uL4 (255 aa).

Belongs to the universal ribosomal protein uL4 family. As to quaternary structure, part of the 50S ribosomal subunit.

One of the primary rRNA binding proteins, this protein initially binds near the 5'-end of the 23S rRNA. It is important during the early stages of 50S assembly. It makes multiple contacts with different domains of the 23S rRNA in the assembled 50S subunit and ribosome. In terms of biological role, forms part of the polypeptide exit tunnel. In Thermococcus onnurineus (strain NA1), this protein is Large ribosomal subunit protein uL4.